Reading from the N-terminus, the 195-residue chain is Large ribosomal subunit protein uL18 (195 aa).

It belongs to the universal ribosomal protein uL18 family. In terms of assembly, part of the 50S ribosomal subunit. Contacts the 5S and 23S rRNAs.

In terms of biological role, this is one of the proteins that bind and probably mediate the attachment of the 5S RNA into the large ribosomal subunit, where it forms part of the central protuberance. This chain is Large ribosomal subunit protein uL18, found in Nanoarchaeum equitans (strain Kin4-M).